Consider the following 426-residue polypeptide: Glutamyl-tRNA reductase (426 aa).

Residues 49–52 (TCNR), serine 109, 114–116 (EGQ), and glutamine 120 each bind substrate. Residue cysteine 50 is the Nucleophile of the active site. Residue 189–194 (GAGETG) coordinates NADP(+).

The protein belongs to the glutamyl-tRNA reductase family. As to quaternary structure, homodimer.

It carries out the reaction (S)-4-amino-5-oxopentanoate + tRNA(Glu) + NADP(+) = L-glutamyl-tRNA(Glu) + NADPH + H(+). Its pathway is porphyrin-containing compound metabolism; protoporphyrin-IX biosynthesis; 5-aminolevulinate from L-glutamyl-tRNA(Glu): step 1/2. The protein operates within porphyrin-containing compound metabolism; chlorophyll biosynthesis. Catalyzes the NADPH-dependent reduction of glutamyl-tRNA(Glu) to glutamate 1-semialdehyde (GSA). The chain is Glutamyl-tRNA reductase from Chlorobium phaeobacteroides (strain BS1).